A 572-amino-acid chain; its full sequence is Bilirubin oxidase (572 aa).

The N-terminal stretch at 1 to 19 is a signal peptide; sequence MFKHTLGAAALSLLFNSNA. A propeptide spanning residues 20–38 is cleaved from the precursor; that stretch reads VQASPVPETSPATGHLFKR. Plastocyanin-like domains are found at residues 98-194 and 404-526; these read VGYD…YMLT and VAFA…VFVD. Residues His-132, His-134, His-172, His-174, His-436, His-439, His-441, His-494, Cys-495, His-496, His-500, and Met-505 each coordinate Cu cation. N-linked (GlcNAc...) asparagine glycans are attached at residues Asn-510 and Asn-520.

It belongs to the multicopper oxidase family. Cu cation serves as cofactor.

The enzyme catalyses 2 (4Z,15Z)-bilirubin IXalpha + O2 = 2 biliverdin IXalpha + 2 H2O. In terms of biological role, oxidation of bilirubin and other tetrapyrroles. The protein is Bilirubin oxidase of Albifimbria verrucaria (Myrothecium leaf spot and pod blight fungus).